Here is a 347-residue protein sequence, read N- to C-terminus: S-adenosylmethionine:tRNA ribosyltransferase-isomerase (347 aa).

The protein belongs to the QueA family. In terms of assembly, monomer.

Its subcellular location is the cytoplasm. The catalysed reaction is 7-aminomethyl-7-carbaguanosine(34) in tRNA + S-adenosyl-L-methionine = epoxyqueuosine(34) in tRNA + adenine + L-methionine + 2 H(+). It functions in the pathway tRNA modification; tRNA-queuosine biosynthesis. Functionally, transfers and isomerizes the ribose moiety from AdoMet to the 7-aminomethyl group of 7-deazaguanine (preQ1-tRNA) to give epoxyqueuosine (oQ-tRNA). This Treponema denticola (strain ATCC 35405 / DSM 14222 / CIP 103919 / JCM 8153 / KCTC 15104) protein is S-adenosylmethionine:tRNA ribosyltransferase-isomerase.